The following is an 86-amino-acid chain: MRATAIVLLLALTLATMFSIECAKQTKQMVDCSHYKKLPPGQQRFCHHMYDPICGSDGKTYKNDCFFCSKVKKTDGTLKFVHFGKC.

Positions 1–19 (MRATAIVLLLALTLATMFS) are cleaved as a signal peptide. In terms of domain architecture, Kazal-like spans 26 to 86 (TKQMVDCSHY…TLKFVHFGKC (61 aa)). 3 disulfide bridges follow: C32–C68, C46–C65, and C54–C86.

In terms of assembly, dimer. Interacts with KLK5 and KLK8. In terms of tissue distribution, skin. Highly expressed at sites of hyperkeratosis. Also detected in thymus, tonsils, testis, pancreas, liver, placenta and brain. Expressed at stratum granulosum and stratum corneum at palmar and plantar sites (at protein level).

The protein localises to the secreted. Serine protease inhibitor which specifically inhibits KLK5. May contribute to the regulation of the desquamation process in skin by inhibiting KLK5. In Homo sapiens (Human), this protein is Serine protease inhibitor Kazal-type 9 (SPINK9).